The following is a 446-amino-acid chain: Nuclear distribution protein PAC1-1 (446 aa).

Positions 9–41 constitute a LisH domain; that stretch reads QAEELHKSLIAYLSSINASQSVTTLREELQIGD. Residues 60 to 86 are a coiled coil; sequence ISVVRLQKRILDLESKIASLQAELDSA. 8 WD repeats span residues 112-153, 155-195, 199-239, 242-281, 284-344, 346-385, 390-430, and 432-446; these read SHRG…RTLK, HTRT…ANIR, GHDH…CVKT, TQGD…ARAS, GHEN…IKTL, GHNN…KLVK, AHEH…TGFR, and VIAT…RVFM.

Belongs to the WD repeat LIS1/nudF family. In terms of assembly, self-associates. Interacts with NDL1 and dynein.

It localises to the cytoplasm. The protein resides in the cytoskeleton. It is found in the spindle pole. Functionally, positively regulates the activity of the minus-end directed microtubule motor protein dynein. May enhance dynein-mediated microtubule sliding by targeting dynein to the microtubule plus end. Required for nuclear migration during vegetative growth as well as development. Required for retrograde early endosome (EE) transport from the hyphal tip. Required for localization of dynein to the mitotic spindle poles. Recruits additional proteins to the dynein complex at SPBs. The chain is Nuclear distribution protein PAC1-1 from Uncinocarpus reesii (strain UAMH 1704).